The chain runs to 264 residues: Wtf element wtf11 (264 aa).

Residues 1-12 are compositionally biased toward polar residues; the sequence is MNSNYVPLTSSV. Residues 1 to 26 form a disordered region; sequence MNSNYVPLTSSVDVEEKMESENGVDL. 4 helical membrane-spanning segments follow: residues 107 to 127, 145 to 165, 180 to 200, and 217 to 237; these read LLFV…VIFG, LSWF…YDFW, WKNT…GFFV, and SLFA…FETL.

This sequence belongs to the WTF family.

Its subcellular location is the membrane. Functionally, may act in meiotic drive. This is Wtf element wtf11 from Schizosaccharomyces pombe (strain 972 / ATCC 24843) (Fission yeast).